The chain runs to 261 residues: Carbonic anhydrase 1 (261 aa).

At alanine 2 the chain carries N-acetylalanine. Residues proline 4–phenylalanine 261 enclose the Alpha-carbonic anhydrase domain. Histidine 65 acts as the Proton donor/acceptor in catalysis. Residues histidine 95, histidine 97, and histidine 120 each coordinate Zn(2+). Substrate contacts are provided by residues threonine 200 and threonine 200–histidine 201.

The protein belongs to the alpha-carbonic anhydrase family. Requires Zn(2+) as cofactor.

Its subcellular location is the cytoplasm. The enzyme catalyses hydrogencarbonate + H(+) = CO2 + H2O. It catalyses the reaction urea = cyanamide + H2O. Its activity is regulated as follows. Inhibited by acetazolamide. Catalyzes the reversible hydration of carbon dioxide. Can hydrate cyanamide to urea. This is Carbonic anhydrase 1 (CA1) from Bos taurus (Bovine).